Here is a 137-residue protein sequence, read N- to C-terminus: Fatty acid-binding protein homolog 8 (137 aa).

The Nuclear localization signal signature appears at 24–34 (KEIGVGLLIRK).

It belongs to the calycin superfamily. Fatty-acid binding protein (FABP) family. In terms of assembly, monomer. In terms of tissue distribution, intestine.

Its subcellular location is the lysosome. It is found in the nucleus. In terms of biological role, lysosomal lipid chaperone which binds to a wide range of unsaturated fatty acids, including high affinity binding to oleic acid and oleoylethanolamide, to transport them into the nucleus. As part of a lysosome-to-nucleus retrograde lipid signaling pathway, translocates into the nucleus where it activates the transcription of genes promoting longevity and activation of mitochondrial beta oxidation. This Caenorhabditis elegans protein is Fatty acid-binding protein homolog 8.